Consider the following 452-residue polypeptide: 1,3-beta-glucanosyltransferase gel1 (452 aa).

A signal peptide spans Met-1–Ala-19. The cysteines at positions 71 and 100 are disulfide-linked. Tyr-89, Asn-159, Glu-160, Asp-201, and Arg-206 together coordinate (1,3-beta-D-glucosyl)n. The Proton donor role is filled by Glu-160. 2 disulfide bridges follow: Cys-215–Cys-345 and Cys-233–Cys-264. Residue Asn-249 is glycosylated (N-linked (GlcNAc...) asparagine). Catalysis depends on Glu-261, which acts as the Nucleophile. Tyr-292 is a (1,3-beta-D-glucosyl)n binding site. The span at Glu-325–Gly-340 shows a compositional bias: polar residues. The interval Glu-325–Ala-419 is disordered. Asn-337 is a glycosylation site (N-linked (GlcNAc...) asparagine). Over residues Ser-393 to Ala-419 the composition is skewed to low complexity. Ala-419 carries GPI-like-anchor amidated alanine lipidation. A propeptide spans Ala-420 to Leu-452 (removed in mature form).

It belongs to the glycosyl hydrolase 72 family. The GPI-like anchor contains a phosphoceramide lipid group.

It is found in the cell membrane. Its function is as follows. Splits internally a 1,3-beta-glucan molecule and transfers the newly generated reducing end (the donor) to the non-reducing end of another 1,3-beta-glucan molecule (the acceptor) forming a 1,3-beta linkage, resulting in the elongation of 1,3-beta-glucan chains in the cell wall. Involved in cell wall morphogenesis. In Aspergillus fumigatus (strain ATCC MYA-4609 / CBS 101355 / FGSC A1100 / Af293) (Neosartorya fumigata), this protein is 1,3-beta-glucanosyltransferase gel1 (gel1).